Reading from the N-terminus, the 416-residue chain is Tyrosine--tRNA ligase (416 aa).

L-tyrosine is bound at residue Tyr40. The short motif at 45-54 (ATAASLHVGH) is the 'HIGH' region element. Residues Tyr177 and Gln181 each coordinate L-tyrosine. The 'KMSKS' region signature appears at 237–241 (KMGKS). An ATP-binding site is contributed by Lys240. One can recognise an S4 RNA-binding domain in the interval 351–416 (LSVAHFLVAA…RKKHKLVRLS (66 aa)).

The protein belongs to the class-I aminoacyl-tRNA synthetase family. TyrS type 1 subfamily. Homodimer.

It localises to the cytoplasm. The catalysed reaction is tRNA(Tyr) + L-tyrosine + ATP = L-tyrosyl-tRNA(Tyr) + AMP + diphosphate + H(+). Functionally, catalyzes the attachment of tyrosine to tRNA(Tyr) in a two-step reaction: tyrosine is first activated by ATP to form Tyr-AMP and then transferred to the acceptor end of tRNA(Tyr). This is Tyrosine--tRNA ligase from Cereibacter sphaeroides (strain ATCC 17029 / ATH 2.4.9) (Rhodobacter sphaeroides).